Consider the following 116-residue polypeptide: ATP synthase lipid-binding protein, mitochondrial (116 aa).

The N-terminal 24 residues, 1-24 (MYCQRLALPLTRSLLASRAPLALR), are a transit peptide targeting the mitochondrion. Residues 57–77 (VGVAGSGAGIGNVFGALVIGY) form a helical membrane-spanning segment. K84 carries the N6,N6,N6-trimethyllysine modification. The helical transmembrane segment at 92–112 (ILGFALSEAMGLFCLTMGFMI) threads the bilayer.

Belongs to the ATPase C chain family. As to quaternary structure, F-type ATPases have 2 components, CF(1) - the catalytic core - and CF(0) - the membrane proton channel. CF(1) has five subunits: alpha(3), beta(3), gamma(1), delta(1), epsilon(1). CF(0) has three main subunits: a, b and c. In terms of processing, trimethylated by ATPSCKMT at Lys-84. Methylation may be required for proper incorporation of the C subunit into the ATP synthase complex and mitochondrial respiration.

The protein resides in the mitochondrion membrane. In terms of biological role, mitochondrial membrane ATP synthase (F(1)F(0) ATP synthase or Complex V) produces ATP from ADP in the presence of a proton gradient across the membrane which is generated by electron transport complexes of the respiratory chain. F-type ATPases consist of two structural domains, F(1) - containing the extramembraneous catalytic core and F(0) - containing the membrane proton channel, linked together by a central stalk and a peripheral stalk. During catalysis, ATP synthesis in the catalytic domain of F(1) is coupled via a rotary mechanism of the central stalk subunits to proton translocation. Part of the complex F(0) domain. A homomeric c-ring of probably 10 subunits is part of the complex rotary element. The polypeptide is ATP synthase lipid-binding protein, mitochondrial (Caenorhabditis briggsae).